The sequence spans 677 residues: DNA-directed RNA polymerase subunit beta' (677 aa).

Zn(2+) is bound by residues Cys69, Cys71, Cys87, and Cys90. Residues Asp489, Asp491, and Asp493 each coordinate Mg(2+).

This sequence belongs to the RNA polymerase beta' chain family. RpoC1 subfamily. As to quaternary structure, in plastids the minimal PEP RNA polymerase catalytic core is composed of four subunits: alpha, beta, beta', and beta''. When a (nuclear-encoded) sigma factor is associated with the core the holoenzyme is formed, which can initiate transcription. Mg(2+) serves as cofactor. The cofactor is Zn(2+).

The protein resides in the plastid. The protein localises to the chloroplast. It catalyses the reaction RNA(n) + a ribonucleoside 5'-triphosphate = RNA(n+1) + diphosphate. In terms of biological role, DNA-dependent RNA polymerase catalyzes the transcription of DNA into RNA using the four ribonucleoside triphosphates as substrates. This Daucus carota (Wild carrot) protein is DNA-directed RNA polymerase subunit beta'.